Reading from the N-terminus, the 221-residue chain is Large ribosomal subunit protein uL4 (221 aa).

Residues 44 to 102 are disordered; that stretch reads AARQGTHKVKRRGEVRGGGKKPYRQKGTGRARQGSTRAPQFAGGGVVHGPTPRDYSQRT. The span at 61–72 shows a compositional bias: basic residues; the sequence is GGKKPYRQKGTG.

This sequence belongs to the universal ribosomal protein uL4 family. Part of the 50S ribosomal subunit.

Functionally, one of the primary rRNA binding proteins, this protein initially binds near the 5'-end of the 23S rRNA. It is important during the early stages of 50S assembly. It makes multiple contacts with different domains of the 23S rRNA in the assembled 50S subunit and ribosome. Forms part of the polypeptide exit tunnel. The polypeptide is Large ribosomal subunit protein uL4 (Streptomyces avermitilis (strain ATCC 31267 / DSM 46492 / JCM 5070 / NBRC 14893 / NCIMB 12804 / NRRL 8165 / MA-4680)).